A 253-amino-acid polypeptide reads, in one-letter code: NAD(P)H-quinone oxidoreductase subunit K (253 aa).

[4Fe-4S] cluster is bound by residues C68, C69, C133, and C164.

Belongs to the complex I 20 kDa subunit family. NDH-1 can be composed of about 15 different subunits; different subcomplexes with different compositions have been identified which probably have different functions. [4Fe-4S] cluster serves as cofactor.

Its subcellular location is the cellular thylakoid membrane. The catalysed reaction is a plastoquinone + NADH + (n+1) H(+)(in) = a plastoquinol + NAD(+) + n H(+)(out). It catalyses the reaction a plastoquinone + NADPH + (n+1) H(+)(in) = a plastoquinol + NADP(+) + n H(+)(out). Functionally, NDH-1 shuttles electrons from an unknown electron donor, via FMN and iron-sulfur (Fe-S) centers, to quinones in the respiratory and/or the photosynthetic chain. The immediate electron acceptor for the enzyme in this species is believed to be plastoquinone. Couples the redox reaction to proton translocation, and thus conserves the redox energy in a proton gradient. Cyanobacterial NDH-1 also plays a role in inorganic carbon-concentration. The chain is NAD(P)H-quinone oxidoreductase subunit K from Synechococcus sp. (strain CC9311).